The primary structure comprises 444 residues: RAC family serine/threonine-protein kinase homolog (444 aa).

The PH domain maps to 5-100; that stretch reads PIKHEGFLTK…WIEILINERE (96 aa). In terms of domain architecture, Protein kinase spans 120-374; sequence FELLNLVGKG…PNLIKRHPFF (255 aa). Residues 126-134 and lysine 149 contribute to the ATP site; that span reads VGKGSFGKV. Aspartate 243 acts as the Proton acceptor in catalysis. Position 278 is a phosphothreonine (threonine 278). In terms of domain architecture, AGC-kinase C-terminal spans 375–444; that stretch reads RSIDWEQLFQ…TYVAESEHLR (70 aa).

The protein belongs to the protein kinase superfamily. AGC Ser/Thr protein kinase family. RAC subfamily.

It catalyses the reaction L-seryl-[protein] + ATP = O-phospho-L-seryl-[protein] + ADP + H(+). The enzyme catalyses L-threonyl-[protein] + ATP = O-phospho-L-threonyl-[protein] + ADP + H(+). In terms of biological role, predominantly involved during the aggregation to control cell polarity and chemotaxis. Phosphorylates talB, gefN, gefS, PI4P 5-kinase and gacQ. The sequence is that of RAC family serine/threonine-protein kinase homolog (pkbA) from Dictyostelium discoideum (Social amoeba).